Reading from the N-terminus, the 603-residue chain is Deuterosome assembly protein 1 (603 aa).

5 coiled-coil regions span residues 14-59 (CEAE…NAQT), 85-197 (MTQN…GKKQ), 227-278 (IEKL…ELQS), 336-399 (QDQP…KQLK), and 454-480 (HTSI…NGKS). Phosphoserine is present on Ser546. The stretch at 557–600 (AAQHFLLEEEKRAKELEKLLNTHIDELQRHTEFTLNKYSKLKQN) forms a coiled coil.

This sequence belongs to the CEP63 family. Interacts with CEP152; the interaction is mutually exclusive with CEP63.

It is found in the cytoplasm. Functionally, key structural component of the deuterosome, a structure that promotes de novo centriole amplification in multiciliated cells. Deuterosome-mediated centriole amplification occurs in terminally differentiated multiciliated cells and can generate more than 100 centrioles. Probably sufficient for the specification and formation of the deuterosome inner core. Interacts with CEP152 and recruits PLK4 to activate centriole biogenesis. This Macaca fascicularis (Crab-eating macaque) protein is Deuterosome assembly protein 1.